We begin with the raw amino-acid sequence, 231 residues long: Aldehyde decarbonylase (231 aa).

Fe cation contacts are provided by Glu32, Glu60, His63, Glu115, and His147.

The protein belongs to the aldehyde decarbonylase family. It depends on Binds 2 metal cations per subunit. The catalytic dinuclear metal-binding site could be either a di-iron or a manganese-iron cofactor. as a cofactor.

The catalysed reaction is a long-chain fatty aldehyde + 2 NADPH + O2 + H(+) = a long-chain alkane + formate + 2 NADP(+) + H2O. Its function is as follows. Catalyzes the decarbonylation of fatty aldehydes to alkanes. Requires the presence of ferredoxin, ferredoxin reductase and NADPH for in vitro decarbonylase activity. Involved in the biosynthesis of alkanes, mainly heptadecane and pentadecane. This is Aldehyde decarbonylase from Synechococcus elongatus (strain ATCC 33912 / PCC 7942 / FACHB-805) (Anacystis nidulans R2).